Consider the following 99-residue polypeptide: UPF0213 protein SP_1535 (99 aa).

Positions His-3–Glu-78 constitute a GIY-YIG domain.

It belongs to the UPF0213 family.

The sequence is that of UPF0213 protein SP_1535 from Streptococcus pneumoniae serotype 4 (strain ATCC BAA-334 / TIGR4).